Reading from the N-terminus, the 377-residue chain is Succinyl-diaminopimelate desuccinylase (377 aa).

Position 67 (histidine 67) interacts with Zn(2+). Residue aspartate 69 is part of the active site. Aspartate 100 is a Zn(2+) binding site. Glutamate 134 (proton acceptor) is an active-site residue. Positions 135, 163, and 349 each coordinate Zn(2+).

Belongs to the peptidase M20A family. DapE subfamily. In terms of assembly, homodimer. It depends on Zn(2+) as a cofactor. Requires Co(2+) as cofactor.

It catalyses the reaction N-succinyl-(2S,6S)-2,6-diaminopimelate + H2O = (2S,6S)-2,6-diaminopimelate + succinate. The protein operates within amino-acid biosynthesis; L-lysine biosynthesis via DAP pathway; LL-2,6-diaminopimelate from (S)-tetrahydrodipicolinate (succinylase route): step 3/3. Catalyzes the hydrolysis of N-succinyl-L,L-diaminopimelic acid (SDAP), forming succinate and LL-2,6-diaminopimelate (DAP), an intermediate involved in the bacterial biosynthesis of lysine and meso-diaminopimelic acid, an essential component of bacterial cell walls. In Dechloromonas aromatica (strain RCB), this protein is Succinyl-diaminopimelate desuccinylase.